The primary structure comprises 247 residues: GTP cyclohydrolase 1 type 2 homolog (247 aa).

A divalent metal cation contacts are provided by H63, H64, D101, H215, and E219.

The protein belongs to the GTP cyclohydrolase I type 2/NIF3 family. Toroid-shaped homohexamer. In the hexamer, 3 dimers assemble to form a ring-like structure surrounding a central hole.

In terms of biological role, provides significant protection from radiation damage and may be involved in the degradation of radiation-damaged nucleotides. This Escherichia coli O157:H7 protein is GTP cyclohydrolase 1 type 2 homolog (ybgI).